The following is a 383-amino-acid chain: Probable assembly chaperone of rpl4 (383 aa).

Over residues 1–12 the composition is skewed to basic residues; it reads MGKPRPHKKKAS. The disordered stretch occupies residues 1 to 33; the sequence is MGKPRPHKKKASKTREKSVLSAGGSISKRKMNE. TPR repeat units lie at residues 35–68, 73–106, 116–147, and 193–226; these read PRKL…ATSN, LSSL…DPTG, AEKF…LRGI, and PEVL…WKDL. Residues 345–383 form a disordered region; sequence NKELGEEMEDDSNVEDGEGEGEEEWEGIESDSDHEMADS. The span at 350-374 shows a compositional bias: acidic residues; the sequence is EEMEDDSNVEDGEGEGEEEWEGIES.

The protein belongs to the ACL4 family.

It localises to the cytoplasm. The protein resides in the nucleus. In terms of biological role, acts as a chaperone for the L4 ribosomal subunit, required for hierarchical ribosome assembly. Shields ribosomal protein L4 until timely release and insertion into the pre-ribosome is possible, once ribosomal protein L18 is present. The protein is Probable assembly chaperone of rpl4 of Emericella nidulans (strain FGSC A4 / ATCC 38163 / CBS 112.46 / NRRL 194 / M139) (Aspergillus nidulans).